A 144-amino-acid polypeptide reads, in one-letter code: Large ribosomal subunit protein uL15 (144 aa).

Residues 1-54 (MRLNTLSPAPGRVTSRKRVGRGIGSGLGKTAGRGHKGLKSRSGGTVKPGFEGGQ) form a disordered region. Residues 21 to 31 (RGIGSGLGKTA) are compositionally biased toward gly residues.

The protein belongs to the universal ribosomal protein uL15 family. As to quaternary structure, part of the 50S ribosomal subunit.

Binds to the 23S rRNA. This chain is Large ribosomal subunit protein uL15, found in Teredinibacter turnerae (strain ATCC 39867 / T7901).